A 262-amino-acid polypeptide reads, in one-letter code: Indole-3-glycerol phosphate synthase (262 aa).

This sequence belongs to the TrpC family.

The catalysed reaction is 1-(2-carboxyphenylamino)-1-deoxy-D-ribulose 5-phosphate + H(+) = (1S,2R)-1-C-(indol-3-yl)glycerol 3-phosphate + CO2 + H2O. The protein operates within amino-acid biosynthesis; L-tryptophan biosynthesis; L-tryptophan from chorismate: step 4/5. The sequence is that of Indole-3-glycerol phosphate synthase from Leptothrix cholodnii (strain ATCC 51168 / LMG 8142 / SP-6) (Leptothrix discophora (strain SP-6)).